Here is a 141-residue protein sequence, read N- to C-terminus: Nucleoside diphosphate kinase (141 aa).

Residues lysine 11, phenylalanine 59, arginine 87, threonine 93, arginine 104, and asparagine 114 each contribute to the ATP site. Histidine 117 serves as the catalytic Pros-phosphohistidine intermediate.

It belongs to the NDK family. In terms of assembly, homotetramer. The cofactor is Mg(2+).

The protein resides in the cytoplasm. It carries out the reaction a 2'-deoxyribonucleoside 5'-diphosphate + ATP = a 2'-deoxyribonucleoside 5'-triphosphate + ADP. It catalyses the reaction a ribonucleoside 5'-diphosphate + ATP = a ribonucleoside 5'-triphosphate + ADP. Its function is as follows. Major role in the synthesis of nucleoside triphosphates other than ATP. The ATP gamma phosphate is transferred to the NDP beta phosphate via a ping-pong mechanism, using a phosphorylated active-site intermediate. In Acidithiobacillus ferrooxidans (strain ATCC 53993 / BNL-5-31) (Leptospirillum ferrooxidans (ATCC 53993)), this protein is Nucleoside diphosphate kinase.